We begin with the raw amino-acid sequence, 247 residues long: UPF0246 protein CD630_18230 (247 aa).

The protein belongs to the UPF0246 family.

The sequence is that of UPF0246 protein CD630_18230 from Clostridioides difficile (strain 630) (Peptoclostridium difficile).